Here is a 435-residue protein sequence, read N- to C-terminus: ATP-dependent Clp protease ATP-binding subunit ClpX 3 (435 aa).

The region spanning 1–53 is the ClpX-type ZB domain; sequence MSSDPPAKTQHCSFCGIEQGRDTPLIAGIEGQICEACVRLAEQVVANWGRKRS. Zn(2+) is bound by residues Cys-12, Cys-15, Cys-34, and Cys-37. Residue 125–132 coordinates ATP; it reads PTGTGKTL.

It belongs to the ClpX chaperone family. As to quaternary structure, component of the ClpX-ClpP complex. Forms a hexameric ring that, in the presence of ATP, binds to fourteen ClpP subunits assembled into a disk-like structure with a central cavity, resembling the structure of eukaryotic proteasomes.

Its function is as follows. ATP-dependent specificity component of the Clp protease. It directs the protease to specific substrates. Can perform chaperone functions in the absence of ClpP. In Methylococcus capsulatus (strain ATCC 33009 / NCIMB 11132 / Bath), this protein is ATP-dependent Clp protease ATP-binding subunit ClpX 3.